The sequence spans 97 residues: Ice-structuring protein (97 aa).

The first 23 residues, 1 to 23 (MALSLFTVGQLIFLFWTLRITEA), serve as a signal peptide directing secretion. The propeptide at 24–48 (NPDPAAKAAPAAVADPAAAAAAAVA) is removed by a dipeptidylpeptidase.

This sequence belongs to the type-I AFP family. Detected in blood serum (at protein level).

It localises to the secreted. Functionally, contributes to protect fish blood from freezing at subzero sea water temperatures. Lowers the blood freezing point. Binds to nascent ice crystals and prevents further growth. This chain is Ice-structuring protein, found in Myzopsetta ferruginea (Yellowtail flounder).